We begin with the raw amino-acid sequence, 193 residues long: Ion-translocating oxidoreductase complex subunit A (193 aa).

6 helical membrane passes run 5-25 (LLLF…FLGL), 47-67 (FVMT…LIPL), 72-92 (LRTL…EMVV), 102-122 (LLGI…VALL), 134-154 (ALYG…FAAI), and 171-191 (AIAL…SGLV).

This sequence belongs to the NqrDE/RnfAE family. In terms of assembly, the complex is composed of six subunits: RsxA, RsxB, RsxC, RsxD, RsxE and RsxG.

The protein resides in the cell inner membrane. In terms of biological role, part of a membrane-bound complex that couples electron transfer with translocation of ions across the membrane. Required to maintain the reduced state of SoxR. The sequence is that of Ion-translocating oxidoreductase complex subunit A from Salmonella arizonae (strain ATCC BAA-731 / CDC346-86 / RSK2980).